Reading from the N-terminus, the 311-residue chain is Porphobilinogen deaminase (311 aa).

Cys-243 bears the S-(dipyrrolylmethanemethyl)cysteine mark.

Belongs to the HMBS family. In terms of assembly, monomer. Dipyrromethane is required as a cofactor.

The enzyme catalyses 4 porphobilinogen + H2O = hydroxymethylbilane + 4 NH4(+). It functions in the pathway porphyrin-containing compound metabolism; protoporphyrin-IX biosynthesis; coproporphyrinogen-III from 5-aminolevulinate: step 2/4. Tetrapolymerization of the monopyrrole PBG into the hydroxymethylbilane pre-uroporphyrinogen in several discrete steps. The chain is Porphobilinogen deaminase from Aliivibrio salmonicida (strain LFI1238) (Vibrio salmonicida (strain LFI1238)).